Here is a 458-residue protein sequence, read N- to C-terminus: Argininosuccinate lyase (458 aa).

This sequence belongs to the lyase 1 family. Argininosuccinate lyase subfamily.

It is found in the cytoplasm. The catalysed reaction is 2-(N(omega)-L-arginino)succinate = fumarate + L-arginine. The protein operates within amino-acid biosynthesis; L-arginine biosynthesis; L-arginine from L-ornithine and carbamoyl phosphate: step 3/3. The sequence is that of Argininosuccinate lyase from Actinobacillus pleuropneumoniae serotype 5b (strain L20).